Reading from the N-terminus, the 149-residue chain is Nucleoside diphosphate kinase (149 aa).

The ATP site is built by Lys9, Phe57, Arg85, Thr91, Arg102, and Asn112. His115 functions as the Pros-phosphohistidine intermediate in the catalytic mechanism.

This sequence belongs to the NDK family. Homotetramer. Mg(2+) is required as a cofactor.

Its subcellular location is the cytoplasm. The catalysed reaction is a 2'-deoxyribonucleoside 5'-diphosphate + ATP = a 2'-deoxyribonucleoside 5'-triphosphate + ADP. It carries out the reaction a ribonucleoside 5'-diphosphate + ATP = a ribonucleoside 5'-triphosphate + ADP. In terms of biological role, major role in the synthesis of nucleoside triphosphates other than ATP. The ATP gamma phosphate is transferred to the NDP beta phosphate via a ping-pong mechanism, using a phosphorylated active-site intermediate. In Staphylococcus epidermidis (strain ATCC 35984 / DSM 28319 / BCRC 17069 / CCUG 31568 / BM 3577 / RP62A), this protein is Nucleoside diphosphate kinase.